We begin with the raw amino-acid sequence, 397 residues long: Tryptophan synthase beta chain (397 aa).

At lysine 87 the chain carries N6-(pyridoxal phosphate)lysine.

This sequence belongs to the TrpB family. In terms of assembly, tetramer of two alpha and two beta chains. It depends on pyridoxal 5'-phosphate as a cofactor.

The catalysed reaction is (1S,2R)-1-C-(indol-3-yl)glycerol 3-phosphate + L-serine = D-glyceraldehyde 3-phosphate + L-tryptophan + H2O. It functions in the pathway amino-acid biosynthesis; L-tryptophan biosynthesis; L-tryptophan from chorismate: step 5/5. Functionally, the beta subunit is responsible for the synthesis of L-tryptophan from indole and L-serine. The sequence is that of Tryptophan synthase beta chain from Salmonella arizonae (strain ATCC BAA-731 / CDC346-86 / RSK2980).